The following is a 229-amino-acid chain: Cytidylate kinase (229 aa).

ATP is bound at residue 10–18; that stretch reads GPAGSGKST.

It belongs to the cytidylate kinase family. Type 1 subfamily.

The protein resides in the cytoplasm. It catalyses the reaction CMP + ATP = CDP + ADP. The catalysed reaction is dCMP + ATP = dCDP + ADP. This is Cytidylate kinase from Leptospira interrogans serogroup Icterohaemorrhagiae serovar Lai (strain 56601).